Consider the following 168-residue polypeptide: HTH-type transcriptional regulator IscR (168 aa).

The region spanning 2 to 131 is the HTH rrf2-type domain; the sequence is KLTSKGRYAV…NNITLGELMS (130 aa). Residues 28 to 51 constitute a DNA-binding region (H-T-H motif); the sequence is LADISERQGISLSYLEQLFSKLRK. [2Fe-2S] cluster is bound by residues Cys92, Cys98, and Cys104.

[2Fe-2S] cluster is required as a cofactor.

Its function is as follows. Regulates the transcription of several operons and genes involved in the biogenesis of Fe-S clusters and Fe-S-containing proteins. The chain is HTH-type transcriptional regulator IscR from Vibrio vulnificus (strain CMCP6).